The sequence spans 608 residues: DNA mismatch repair protein MutL (608 aa).

Residues 363-397 (ASLAMARKPDPPRFHETARPQPDPRHTPGTESVSV) form a disordered region. The span at 369–390 (RKPDPPRFHETARPQPDPRHTP) shows a compositional bias: basic and acidic residues.

The protein belongs to the DNA mismatch repair MutL/HexB family.

Functionally, this protein is involved in the repair of mismatches in DNA. It is required for dam-dependent methyl-directed DNA mismatch repair. May act as a 'molecular matchmaker', a protein that promotes the formation of a stable complex between two or more DNA-binding proteins in an ATP-dependent manner without itself being part of a final effector complex. This Pelobacter propionicus (strain DSM 2379 / NBRC 103807 / OttBd1) protein is DNA mismatch repair protein MutL.